Here is a 777-residue protein sequence, read N- to C-terminus: Beta-hexosaminidase (777 aa).

The signal sequence occupies residues 1–18; it reads MKRLTFGACICCLLSLMA. Cys19 is lipidated: N-palmitoyl cysteine. Cys19 is lipidated: S-diacylglycerol cysteine. One can recognise a PA14 domain in the interval 625–766; that stretch reads APKPGLTIRT…VMIRLKGEEK (142 aa).

It belongs to the glycosyl hydrolase 20 family.

It is found in the cell outer membrane. The catalysed reaction is Hydrolysis of terminal non-reducing N-acetyl-D-hexosamine residues in N-acetyl-beta-D-hexosaminides.. This is Beta-hexosaminidase (nahA) from Porphyromonas gingivalis (strain ATCC BAA-308 / W83).